Reading from the N-terminus, the 370-residue chain is Histidinol-phosphate aminotransferase 1 (370 aa).

K222 carries the post-translational modification N6-(pyridoxal phosphate)lysine.

The protein belongs to the class-II pyridoxal-phosphate-dependent aminotransferase family. Histidinol-phosphate aminotransferase subfamily. In terms of assembly, homodimer. Pyridoxal 5'-phosphate is required as a cofactor.

It carries out the reaction L-histidinol phosphate + 2-oxoglutarate = 3-(imidazol-4-yl)-2-oxopropyl phosphate + L-glutamate. Its pathway is amino-acid biosynthesis; L-histidine biosynthesis; L-histidine from 5-phospho-alpha-D-ribose 1-diphosphate: step 7/9. The polypeptide is Histidinol-phosphate aminotransferase 1 (Bacillus cereus (strain ATCC 10987 / NRS 248)).